Reading from the N-terminus, the 816-residue chain is Probable transcriptional regulator SLK2 (816 aa).

Disordered regions lie at residues 133-153 and 166-189; these read HDPS…SQTN and SFFQ…KQDD. Polar residues-rich tracts occupy residues 139–153 and 166–176; these read LGGS…SQTN and SFFQDPNNLTQ. Residues 307–554 are dimerization; that stretch reads PSESSIVYWR…DQKVGPIEAL (248 aa). Residues 316–330 carry the Nuclear localization signal motif; the sequence is RKFVTEYFSPRAKKR. Composition is skewed to polar residues over residues 644–662 and 672–711; these read IQQE…QGTS and PSIS…SGNQ. The segment at 644 to 711 is disordered; it reads IQQEPSRNRS…QPPSCSSGNQ (68 aa).

This sequence belongs to the adn1/SEU family. Forms corepressor complexes with LUH; LUH is the transcription repressor subunit and SLK2 the specific DNA-binding adapters. Expressed in young flower meristems, ovules and the carpel margin meristem.

Its subcellular location is the nucleus. In terms of biological role, probable transcription regulator that functions in the development of the carpel margin meristem similarly to SEUSS (SEU). In association with SEU, supports organ development from meristematic regions by facilitating auxin response and thus organ initiation, and by sustaining meristematic potential through the maintenance of PHABULOSA expression. DNA-binding adapter subunit of the SEU-SLK2 transcriptional corepressor of abiotic stress (e.g. salt and osmotic stress) response genes. In Arabidopsis thaliana (Mouse-ear cress), this protein is Probable transcriptional regulator SLK2 (SLK2).